A 220-amino-acid polypeptide reads, in one-letter code: MELYLDTANVAEVERLARIFPIAGVTTNPSIIAASKESIWEVLPRLQKAIGDEGILFAQTMSRDAQGMVEEAKRLRDAIPGIVVKIPVTSEGLAAIKILKKEGITTLGTAVYSAAQGLLAALAGAKYVAPYVNRVDAQGGDGIRTVQELQTLLEMHAPESMVLAASFKTPRQALDCLLAGCESITLPLDVAQQMLNTPAVESAIEKFEHDWNAAFGTTHL.

The active-site Schiff-base intermediate with substrate is Lys85.

It belongs to the transaldolase family. Type 3A subfamily. Homodecamer.

It is found in the cytoplasm. It carries out the reaction beta-D-fructose 6-phosphate = dihydroxyacetone + D-glyceraldehyde 3-phosphate. Its function is as follows. Catalyzes the reversible formation of fructose 6-phosphate from dihydroxyacetone and D-glyceraldehyde 3-phosphate via an aldolization reaction. Can utilize hydroxyacetone as an alternative donor substrate. Is also able to catalyze the direct self-aldol addition of glycolaldehyde. Is less catalytically efficient than the isozyme FsaA. Does not display transaldolase activity. The chain is Fructose-6-phosphate aldolase 2 (fsaB) from Escherichia coli (strain K12).